The sequence spans 233 residues: Flagellar calcium-binding protein TB-17 (233 aa).

A compositionally biased stretch (polar residues) spans 1–11 (MGCSGSKNASN). The disordered stretch occupies residues 1–29 (MGCSGSKNASNPKDGAASKGGKDGKTTAD). The span at 20 to 29 (GGKDGKTTAD) shows a compositional bias: basic and acidic residues. 3 EF-hand domains span residues 48-83 (ESKS…ILKL), 130-165 (YDIF…LKEW), and 167-202 (VDIT…KKLQ). The Ca(2+) site is built by aspartate 61, asparagine 63, threonine 65, lysine 67, glutamate 72, aspartate 143, aspartate 145, serine 147, glutamate 154, aspartate 180, asparagine 182, serine 184, and glutamate 191. The segment at 203–233 (VSGDPDDEENGANEGDGANAGDGVPAAEGSA) is disordered. Low complexity predominate over residues 214–225 (ANEGDGANAGDG).

The protein belongs to the calflagin family.

It localises to the cell projection. It is found in the cilium. The protein localises to the flagellum. Functionally, may contribute to the rapid motility of the trypanosomes, playing a role either in flagellar structure or in calcium metabolism. Could alternate between a GDP-bound inactive form to a calcium/GTP-bound active form. The sequence is that of Flagellar calcium-binding protein TB-17 (FCABP) from Trypanosoma brucei brucei.